Reading from the N-terminus, the 291-residue chain is MPTLKDIRVRIKGIKSTQQVTKAMKMVAAAKLRRAQERAIMARPYAGKLKEMLGSLSAKVDTSLNPLLSSRQDVKKVLVILIAADRGLCGAFNTNIIKLAQKVVTEDYAAQYKNGGVSMICAGSRGFDFFRKRGFSIVKGYPSVFQNLDFSVAKEIAETASGMYLRGEADKVIVVYNEFKSVLAPVLKAEDLLPIAAENAGKDNSGDYIYEPSPAVIIDELVPKHLSTQVWRMMLESNAAEQAARMTAMDSATENAKELLRTLNISYNRARQAAITKELSEIVAGADALKN.

This sequence belongs to the ATPase gamma chain family. As to quaternary structure, F-type ATPases have 2 components, CF(1) - the catalytic core - and CF(0) - the membrane proton channel. CF(1) has five subunits: alpha(3), beta(3), gamma(1), delta(1), epsilon(1). CF(0) has three main subunits: a, b and c.

The protein resides in the cell inner membrane. In terms of biological role, produces ATP from ADP in the presence of a proton gradient across the membrane. The gamma chain is believed to be important in regulating ATPase activity and the flow of protons through the CF(0) complex. This Chlorobium limicola (strain DSM 245 / NBRC 103803 / 6330) protein is ATP synthase gamma chain.